A 528-amino-acid chain; its full sequence is Na(+)/H(+) antiporter NhaB (528 aa).

11 helical membrane-spanning segments follow: residues 23 to 45 (FAIL…IAGW), 66 to 86 (PGGL…TQVL), 95 to 115 (VLLL…LLLY), 130 to 164 (VSML…FYSI), 203 to 223 (LLMH…VGEP), 241 to 261 (IRMS…CFIV), 310 to 330 (LIVG…SVII), 349 to 369 (EEAL…GVII), 390 to 410 (LVIF…VFVG), 448 to 468 (ATPN…APLI), and 475 to 495 (MVMM…LAIE).

This sequence belongs to the NhaB Na(+)/H(+) (TC 2.A.34) antiporter family.

The protein resides in the cell inner membrane. It catalyses the reaction 2 Na(+)(in) + 3 H(+)(out) = 2 Na(+)(out) + 3 H(+)(in). Its function is as follows. Na(+)/H(+) antiporter that extrudes sodium in exchange for external protons. In Shewanella amazonensis (strain ATCC BAA-1098 / SB2B), this protein is Na(+)/H(+) antiporter NhaB.